A 258-amino-acid chain; its full sequence is MSLIDPRAIIDPTAVLADNVEVGPWSIIGPGVEIGEGTVVGPHVVLKGPTRIGKHNRIYQFSSVGEDTPDLKYKGEETRLVIGDHNVIREGVTIHRGTVQDRAETTLGDHNLIMAYAHIGHDSVIGNHVILVNNTALAGHVHVDDWAILSGFTLVHQFCHIGAHSFSGMGTAIGKDVPAFVTVFGNPAEARSMNFEGMRRRGFSEEAIHALRRAYKTVYRQGLTIGQALADLAEPAAQFPEVAVFLQSIQTSTRGIIR.

It belongs to the transferase hexapeptide repeat family. LpxA subfamily. As to quaternary structure, homotrimer.

The protein localises to the cytoplasm. The catalysed reaction is a (3R)-hydroxyacyl-[ACP] + UDP-N-acetyl-alpha-D-glucosamine = a UDP-3-O-[(3R)-3-hydroxyacyl]-N-acetyl-alpha-D-glucosamine + holo-[ACP]. The protein operates within glycolipid biosynthesis; lipid IV(A) biosynthesis; lipid IV(A) from (3R)-3-hydroxytetradecanoyl-[acyl-carrier-protein] and UDP-N-acetyl-alpha-D-glucosamine: step 1/6. In terms of biological role, involved in the biosynthesis of lipid A, a phosphorylated glycolipid that anchors the lipopolysaccharide to the outer membrane of the cell. This Pseudomonas syringae pv. syringae (strain B728a) protein is Acyl-[acyl-carrier-protein]--UDP-N-acetylglucosamine O-acyltransferase.